A 273-amino-acid polypeptide reads, in one-letter code: Putative inactive beta-glucuronidase protein GUSBP11 (273 aa).

Residues 1-20 (MTAAETGRGKPRLGGGSGLG) are disordered.

This sequence belongs to the glycosyl hydrolase 2 family.

This is Putative inactive beta-glucuronidase protein GUSBP11 (GUSBP11) from Homo sapiens (Human).